The chain runs to 227 residues: Isopentenyl-diphosphate Delta-isomerase 1 (227 aa).

Substrate is bound at residue lysine 36. Residues histidine 40 and histidine 51 each coordinate Mg(2+). The 151-residue stretch at 49-199 (LLHRAFSVFL…EIKITPWFKI (151 aa)) folds into the Nudix hydrolase domain. Substrate-binding residues include arginine 70 and lysine 74. The active site involves cysteine 86. Serine 87 contacts substrate. Residues glutamate 146 and glutamate 148 each contribute to the Mg(2+) site. The active site involves glutamate 148. An N6-acetyllysine modification is found at lysine 176. A Microbody targeting signal motif is present at residues 225 to 227 (YRM).

The protein belongs to the IPP isomerase type 1 family. As to quaternary structure, monomer. Mg(2+) is required as a cofactor.

It is found in the peroxisome. The catalysed reaction is isopentenyl diphosphate = dimethylallyl diphosphate. It participates in isoprenoid biosynthesis; dimethylallyl diphosphate biosynthesis; dimethylallyl diphosphate from isopentenyl diphosphate: step 1/1. In terms of biological role, catalyzes the 1,3-allylic rearrangement of the homoallylic substrate isopentenyl (IPP) to its highly electrophilic allylic isomer, dimethylallyl diphosphate (DMAPP). This Homo sapiens (Human) protein is Isopentenyl-diphosphate Delta-isomerase 1 (IDI1).